Here is a 209-residue protein sequence, read N- to C-terminus: Glycerol-3-phosphate acyltransferase (209 aa).

5 helical membrane-spanning segments follow: residues 8 to 28, 78 to 98, 124 to 144, 149 to 169, and 170 to 190; these read NVLF…YILA, VLVL…LIGI, VLLV…LIVA, ISSL…FIVH, and PDMP…IIFY.

This sequence belongs to the PlsY family. As to quaternary structure, probably interacts with PlsX.

The protein localises to the cell inner membrane. The catalysed reaction is an acyl phosphate + sn-glycerol 3-phosphate = a 1-acyl-sn-glycero-3-phosphate + phosphate. The protein operates within lipid metabolism; phospholipid metabolism. In terms of biological role, catalyzes the transfer of an acyl group from acyl-phosphate (acyl-PO(4)) to glycerol-3-phosphate (G3P) to form lysophosphatidic acid (LPA). This enzyme utilizes acyl-phosphate as fatty acyl donor, but not acyl-CoA or acyl-ACP. In Nitratiruptor sp. (strain SB155-2), this protein is Glycerol-3-phosphate acyltransferase.